The chain runs to 219 residues: MLLFRAASLLPLLCFTVGAFPFMDEEGSGSFAQEVLHSRSYPLANAHRGPFVDLPLFRQNRRKISQNFILHSDPREHMDEEALRRKLVWESAIRREKMRSHPDQVLPIGQDALKRSRCHALPFIQNVFRKNCFPVRLPNKFCFGQCNSFYVPGWPAGLSQPCTSCAPSRSRRISLPLRCRAGHLAWQEVELVEECECETRYDRNTVEPAGSGEGFLPVS.

The first 19 residues, 1–19, serve as a signal peptide directing secretion; the sequence is MLLFRAASLLPLLCFTVGA. Intrachain disulfides connect C118–C165, C132–C179, C142–C195, and C146–C197. The CTCK domain maps to 118 to 198; sequence CHALPFIQNV…VELVEECECE (81 aa).

The protein belongs to the DAN family. Interacts with nr1-a.

The protein localises to the secreted. Functionally, plays an important role in regulating the left-right axis by blocking a tgfb1 cascade in the right posterior paraxial mesoderm. Functions as an inhibitor of bmp, tgfb1, nodal, activin and wnt signaling in the ectoderm. May inhibit mesodermal signals, probably through an inhibition of nodal/activin pathways. Seems to regulates cell fate specification and competence before the onset of neural induction. Expression in the entire ectodermal region prior to gastrulation might act to prevent fate specification in the ectoderm and ensure the maintenance of the stem-cell-like properties exhibited by ectodermal cells. The polypeptide is DAN domain family member 5 (dand5) (Xenopus tropicalis (Western clawed frog)).